The following is a 68-amino-acid chain: Conotoxin phi-MiXXVIIB (68 aa).

Residues 1–29 (MRFFFLLLTVALFLTSITGDDAERMLGMK) form the signal peptide. A propeptide spanning residues 30–35 (EGGYVR) is cleaved from the precursor. Cystine bridges form between Cys38–Cys49, Cys42–Cys51, Cys45–Cys56, and Cys50–Cys61. Pro44 carries the 4-hydroxyproline modification.

Belongs to the conotoxin G2 superfamily. 1 family. As to expression, expressed by the venom duct.

It localises to the secreted. Functionally, this peptide promotes cell proliferation (EC(50)=17.85 uM) and inhibits apoptosis (EC(50)=2.2 uM). The chain is Conotoxin phi-MiXXVIIB from Conus miles (Soldier cone).